A 681-amino-acid chain; its full sequence is Methionine--tRNA ligase (681 aa).

The 'HIGH' region signature appears at 14–24; that stretch reads PYANGSIHLGH. 4 residues coordinate Zn(2+): Cys145, Cys148, Cys158, and Cys161. Positions 331-335 match the 'KMSKS' region motif; sequence KMSKS. Residue Lys334 coordinates ATP. The tRNA-binding domain maps to 579-681; it reads AFAAIDLRVA…SGAKPGQRIK (103 aa).

It belongs to the class-I aminoacyl-tRNA synthetase family. MetG type 1 subfamily. Homodimer. It depends on Zn(2+) as a cofactor.

The protein resides in the cytoplasm. It carries out the reaction tRNA(Met) + L-methionine + ATP = L-methionyl-tRNA(Met) + AMP + diphosphate. Its function is as follows. Is required not only for elongation of protein synthesis but also for the initiation of all mRNA translation through initiator tRNA(fMet) aminoacylation. This is Methionine--tRNA ligase from Pseudomonas fluorescens (strain ATCC BAA-477 / NRRL B-23932 / Pf-5).